A 297-amino-acid chain; its full sequence is tRNA pseudouridine synthase A (297 aa).

The active-site Nucleophile is the Asp-57. Tyr-115 contacts substrate.

This sequence belongs to the tRNA pseudouridine synthase TruA family. Homodimer.

It carries out the reaction uridine(38/39/40) in tRNA = pseudouridine(38/39/40) in tRNA. Its function is as follows. Formation of pseudouridine at positions 38, 39 and 40 in the anticodon stem and loop of transfer RNAs. The polypeptide is tRNA pseudouridine synthase A (Nitratidesulfovibrio vulgaris (strain ATCC 29579 / DSM 644 / CCUG 34227 / NCIMB 8303 / VKM B-1760 / Hildenborough) (Desulfovibrio vulgaris)).